We begin with the raw amino-acid sequence, 368 residues long: Interferon-stimulated 20 kDa exonuclease-like 2 (368 aa).

Disordered regions lie at residues 33–107 (FLEQ…APSK) and 127–187 (PKTK…PTVP). Residues 42 to 54 (KKNQPPNKVSKLN) show a composition bias toward polar residues. Residues 77–96 (KKKEAAASKRDSERSKDKKA) show a composition bias toward basic and acidic residues. Basic residues predominate over residues 131-145 (STQKKGSKKKSLKKK). Positions 194–368 (MVAIDCEMVG…QHLAQNPPEN (175 aa)) constitute an Exonuclease domain.

It is found in the nucleus. The protein resides in the nucleolus. Its function is as follows. 3'-&gt; 5'-exoribonuclease involved in ribosome biogenesis in the processing of the 12S pre-rRNA. Displays a strong specificity for a 3'-end containing a free hydroxyl group. The sequence is that of Interferon-stimulated 20 kDa exonuclease-like 2 (Isg20l2) from Mus musculus (Mouse).